The following is a 1223-amino-acid chain: Kinesin-like protein costa (1223 aa).

One can recognise a Kinesin motor domain in the interval 4–394 (PIQVAVRICP…LQFAFKVQCV (391 aa)). Positions 13-90 (PYTEPSENRK…LPTDSNGNEN (78 aa)) are disordered. Residues 39-62 (AKAESFSDSEDNKNDASNRQRPEE) are compositionally biased toward basic and acidic residues. 178-185 (GQRGQGKT) provides a ligand contact to ATP. Disordered regions lie at residues 494–528 (RSQKQLVPIQEAEEPEESVSEPPNSDNDTDNESQR), 560–604 (KHPK…SIQP), and 625–646 (TAQPPPSVLDPESSIDPLESSA). The span at 569–593 (QERDKESKLDAPPEKDKEKIEERKT) shows a compositional bias: basic and acidic residues. Coiled coils occupy residues 658–743 (AAAN…QGRE), 773–825 (ESGQ…GASG), and 982–1015 (NKVIDLRDSSRKLELQLVQLERERDAWEWKERVL). The segment at 774 to 799 (SGQKLKKLQQSMAESRKQQEELEKKI) is disordered. The span at 787 to 799 (ESRKQQEELEKKI) shows a compositional bias: basic and acidic residues. The segment covering 1162–1178 (TTTATATTTTTTTTTTT) has biased composition (low complexity). Residues 1162 to 1188 (TTTATATTTTTTTTTTTGGKGKERGLP) form a disordered region.

The protein belongs to the TRAFAC class myosin-kinesin ATPase superfamily. Kinesin family. KIF27 subfamily. In terms of assembly, homodimer (Potential). Binds microtubules. Interacts with ci, smo, sgg, CkIalpha and protein kinase A catalytic subunit.

It is found in the cytoplasm. Its subcellular location is the cytoskeleton. Regulates cubitus interruptus (ci) processing by recruiting multiple kinases to promote its efficient phosphorylation. Scaffolds multiple kinases and ci into proximity to promote its hyperphosphorylation, which then targets it for SCFSlimb/proteasome-mediated processing to generate its repressor form. Hh signaling inhibits ci phosphorylation by interfering with the cos-ci-kinases complex formation. The sequence is that of Kinesin-like protein costa (cos) from Drosophila pseudoobscura pseudoobscura (Fruit fly).